Consider the following 534-residue polypeptide: Protein FAM83D (534 aa).

Disordered stretches follow at residues 320 to 372 and 501 to 534; these read TPPS…STLG and GLNR…RGLQ. Residues 329–342 show a composition bias toward polar residues; it reads TKPQAERLTSTPAR. Residues 350 to 362 are compositionally biased toward basic and acidic residues; that stretch reads RMNKDIEEPDRKS. Polar residues predominate over residues 511–520; that stretch reads EARQPNTNID.

Belongs to the FAM83 family.

It is found in the cytoplasm. The protein localises to the cytoskeleton. The protein resides in the spindle. Its subcellular location is the spindle pole. Functionally, may regulate cell proliferation, growth, migration and epithelial to mesenchymal transition. May also be important for proper chromosome congression and alignment during mitosis. The sequence is that of Protein FAM83D from Danio rerio (Zebrafish).